The primary structure comprises 473 residues: Catalase easC (473 aa).

Positions 1 to 15 are enriched in low complexity; it reads MASEVSVASSGSEHS. A disordered region spans residues 1-31; it reads MASEVSVASSGSEHSGAQKCPFQDPGLSSMD. The active site involves H54. Y344 lines the heme pocket. A disordered region spans residues 352–389; it reads LGPNNLDLPANRTKKLADGSRPEKAEMAPQKVPSQEHA. Over residues 366–377 the composition is skewed to basic and acidic residues; that stretch reads KLADGSRPEKAE.

Belongs to the catalase family. The cofactor is heme.

It functions in the pathway alkaloid biosynthesis; ergot alkaloid biosynthesis. Functionally, catalase; part of the gene cluster that mediates the biosynthesis of fungal ergot alkaloid. DmaW catalyzes the first step of ergot alkaloid biosynthesis by condensing dimethylallyl diphosphate (DMAP) and tryptophan to form 4-dimethylallyl-L-tryptophan. The second step is catalyzed by the methyltransferase easF that methylates 4-dimethylallyl-L-tryptophan in the presence of S-adenosyl-L-methionine, resulting in the formation of 4-dimethylallyl-L-abrine. The catalase easC and the FAD-dependent oxidoreductase easE then transform 4-dimethylallyl-L-abrine to chanoclavine-I which is further oxidized by easD in the presence of NAD(+), resulting in the formation of chanoclavine-I aldehyde. Agroclavine dehydrogenase easG then mediates the conversion of chanoclavine-I aldehyde to agroclavine via a non-enzymatic adduct reaction: the substrate is an iminium intermediate that is formed spontaneously from chanoclavine-I aldehyde in the presence of glutathione. The presence of easA is not required to complete this reaction. Further conversion of agroclavine to paspalic acid is a two-step process involving oxidation of agroclavine to elymoclavine and of elymoclavine to paspalic acid, the second step being performed by the elymoclavine oxidase cloA. Paspalic acid is then further converted to D-lysergic acid. Ergopeptines are assembled from D-lysergic acid and three different amino acids by the D-lysergyl-peptide-synthetases composed each of a monomudular and a trimodular nonribosomal peptide synthetase subunit. LpsB and lpsC encode the monomodular subunits responsible for D-lysergic acid activation and incorporation into the ergopeptine backbone. LpsA1 and A2 subunits encode the trimodular nonribosomal peptide synthetase assembling the tripeptide portion of ergopeptines. LpsA1 is responsible for formation of the major ergopeptine, ergotamine, and lpsA2 for alpha-ergocryptine, the minor ergopeptine of the total alkaloid mixture elaborated by C.purpurea. D-lysergyl-tripeptides are assembled by the nonribosomal peptide synthetases and released as N-(D-lysergyl-aminoacyl)-lactams. Cyclolization of the D-lysergyl-tripeptides is performed by the Fe(2+)/2-ketoglutarate-dependent dioxygenase easH which introduces a hydroxyl group into N-(D-lysergyl-aminoacyl)-lactam at alpha-C of the aminoacyl residue followed by spontaneous condensation with the terminal lactam carbonyl group. The protein is Catalase easC of Claviceps purpurea (strain 20.1) (Ergot fungus).